The primary structure comprises 141 residues: Large ribosomal subunit protein uL11 (141 aa).

Belongs to the universal ribosomal protein uL11 family. Part of the ribosomal stalk of the 50S ribosomal subunit. Interacts with L10 and the large rRNA to form the base of the stalk. L10 forms an elongated spine to which L12 dimers bind in a sequential fashion forming a multimeric L10(L12)X complex. One or more lysine residues are methylated.

Forms part of the ribosomal stalk which helps the ribosome interact with GTP-bound translation factors. This is Large ribosomal subunit protein uL11 from Aster yellows witches'-broom phytoplasma (strain AYWB).